A 289-amino-acid polypeptide reads, in one-letter code: CRISPR system Cms protein Csm4 (289 aa).

It belongs to the CRISPR-associated Csm4 family. Probably part of the Csm effector complex, that includes Cas10, Csm2, Csm3, Csm4, Csm5 and mature crRNA. Interacts with Cas10 (csm1).

Functionally, CRISPR (clustered regularly interspaced short palindromic repeat) is an adaptive immune system that provides protection against mobile genetic elements (viruses, transposable elements and conjugative plasmids). CRISPR clusters contain spacers, sequences complementary to antecedent mobile elements, and target invading nucleic acids. CRISPR clusters are transcribed and processed into CRISPR RNA (crRNA). The type III-A Csm effector complex binds crRNA and acts as a crRNA-guided RNase, DNase and cyclic oligoadenylate synthase; binding of target RNA cognate to the crRNA is required for all activities. Its function is as follows. The subunit probably binds to the 5' handle of the crRNA, helping in discrimination between self- and non-self. This Thermococcus onnurineus (strain NA1) protein is CRISPR system Cms protein Csm4.